We begin with the raw amino-acid sequence, 906 residues long: Eukaryotic translation initiation factor 3 subunit C (906 aa).

Residues 1-22 (MSRFFANGSDSESESSEEEVQA) are disordered. Positions 11-20 (SESESSEEEV) are enriched in acidic residues. A phosphoserine mark is found at Ser-34, Ser-165, Ser-176, and Ser-185. Residues 158–283 (REAPDQESEA…KRPEDDEDGE (126 aa)) form a disordered region. Residues 162–186 (DQESEAEDEEAAQDSDGGDAGDDSD) are compositionally biased toward acidic residues. Positions 195–209 (EAAPKVAKTVPAKAA) are enriched in low complexity. Over residues 211–237 (ADDDDSDDSIDWDSDSETETESSDDEN) the composition is skewed to acidic residues. Over residues 242–270 (MRERFLKRTTEKEEKDDDKRKDKRKEQKI) the composition is skewed to basic and acidic residues. In terms of domain architecture, PCI spans 641–817 (FHMHINLELL…ETVVMHRSEP (177 aa)). Disordered stretches follow at residues 853 to 873 (GNMG…NWGG) and 887 to 906 (QRGR…IDEE). The span at 894 to 906 (QQQQQQVQTIDEE) shows a compositional bias: low complexity.

It belongs to the eIF-3 subunit C family. In terms of assembly, component of the eukaryotic translation initiation factor 3 (eIF-3) complex. The eIF-3 complex interacts with pix.

The protein resides in the cytoplasm. Functionally, component of the eukaryotic translation initiation factor 3 (eIF-3) complex, which is involved in protein synthesis of a specialized repertoire of mRNAs and, together with other initiation factors, stimulates binding of mRNA and methionyl-tRNAi to the 40S ribosome. The eIF-3 complex specifically targets and initiates translation of a subset of mRNAs involved in cell proliferation. The sequence is that of Eukaryotic translation initiation factor 3 subunit C from Drosophila ananassae (Fruit fly).